A 429-amino-acid chain; its full sequence is uncharacterized protein (429 aa).

Residues Met-1–Gln-12 are compositionally biased toward basic and acidic residues. 3 disordered regions span residues Met-1 to Ala-63, Arg-257 to Met-306, and Tyr-320 to Glu-429. Residues Glu-328–Val-362 are compositionally biased toward acidic residues. Over residues Lys-369–Ser-378 the composition is skewed to basic and acidic residues.

This sequence belongs to the LEO1 family.

The protein localises to the nucleus. This is an uncharacterized protein from Schizosaccharomyces pombe (strain 972 / ATCC 24843) (Fission yeast).